A 177-amino-acid polypeptide reads, in one-letter code: MNDIVKSAWASVKMNTDFICVDTYSGYRSNQLDPLGVQHLSSPDVSDLDLGEMVKDALSHSRFVLPAPRTDIWIHPEVTFDLDLYDSRRTVERYDEWVKKLMVHYGYKTKRALFKDMKSCDICCNHDAITISPTRHEKLEVWGGTGLKGSDNVILSVDSSPTEIGAGLRLALSRCKG.

As to quaternary structure, interacts with the C-terminal DNase fragment (residues 954-1077) of cognate toxin CdiA-YPIII.

In terms of biological role, immunity protein component of a toxin-immunity protein module, which functions as a cellular contact-dependent growth inhibition (CDI) system. CDI modules allow bacteria to communicate with and inhibit the growth of closely related neighboring bacteria in a contact-dependent fashion. Neutralizes the toxic activity of cognate toxin CdiA-YPIII (residues 954-1077). Does not inhibit toxic activity of CdiA from other toxin-immunity modules. This Yersinia pseudotuberculosis serotype O:3 (strain YPIII) protein is Immunity protein CdiI-YPIII.